Here is a 483-residue protein sequence, read N- to C-terminus: MFS-type transporter hepF (483 aa).

The interval 1-31 is disordered; that stretch reads METPAGKADRPRDHDSEQSQDNVVSWEGEDD. Residues 7-17 show a composition bias toward basic and acidic residues; it reads KADRPRDHDSE. 11 consecutive transmembrane segments (helical) span residues 89–109, 124–144, 147–167, 179–199, 206–226, 276–296, 311–331, 357–377, 385–405, 416–436, and 448–468; these read TIVV…AAPI, ILYT…MLIV, FFAG…VADL, FVTL…GFLT, WVFW…ILFT, PISL…YVLV, IGIS…GLWI, PMMI…GWSV, MPIV…MPMV, AASA…VLPL, and GWGN…LIAI.

The protein belongs to the major facilitator superfamily.

It is found in the cell membrane. Its function is as follows. MFS-type transporter; part of the gene cluster that mediates the biosynthesis of heptelidic acid (HA), a sesquiterpene lactone that acts as an inhibitor of glyceraldehyde-3-phosphatedehydrogenase (GAPDH) and a growth inhibitor of the salt-tolerant lactic acid bacteria in soy sauce brewing. Might be required for efficient secretion of heptelidic acid. In Aspergillus oryzae (strain ATCC 42149 / RIB 40) (Yellow koji mold), this protein is MFS-type transporter hepF (hepF).